The following is a 361-amino-acid chain: UDP-D-xylose:L-fucose alpha-1,3-D-xylosyltransferase 1 (361 aa).

Residues 1–21 (MEQKQHILKQSTFSSSPSSYS) form a disordered region. Residues 1–34 (MEQKQHILKQSTFSSSPSSYSSISDRPISLLSRN) lie on the Cytoplasmic side of the membrane. Positions 11-21 (STFSSSPSSYS) are enriched in low complexity. A helical; Signal-anchor for type II membrane protein membrane pass occupies residues 35 to 55 (GLLLLLLALVLLLGVLLPWPG). The Lumenal portion of the chain corresponds to 56–361 (SPLFLFPNRL…ALESPLGKLE (306 aa)). 2 N-linked (GlcNAc...) asparagine glycosylation sites follow: Asn-92 and Asn-167. Positions 190-192 (DVD) match the DXD motif motif. Residues Asn-222 and Asn-286 are each glycosylated (N-linked (GlcNAc...) asparagine).

This sequence belongs to the glycosyltransferase 77 family. Mn(2+) serves as cofactor. Mg(2+) is required as a cofactor. Post-translationally, glycosylated. In terms of tissue distribution, expressed in roots, rosette leaves, cauline leaves and stems.

Its subcellular location is the golgi apparatus membrane. Functionally, catalyzes the transfer of D-xylose from UDP-alpha-D-xylose onto L-fucose. Probably involved in the biosynthesis of rhamnogalacturonan II (RG-II) through xylosylation of the internal fucose moiety of the A-chain of RG-II, a structurally complex pectic polysaccharide of the primary cell wall. RG-II is essential for the cell wall integrity of rapidly growing tissues such as roots and pollen tube growth and elongation. The protein is UDP-D-xylose:L-fucose alpha-1,3-D-xylosyltransferase 1 of Arabidopsis thaliana (Mouse-ear cress).